The following is a 652-amino-acid chain: Transmembrane 9 superfamily member 12 (652 aa).

Positions 1–20 are cleaved as a signal peptide; sequence MFGVYRVFVLLVFVSQLCNG. The Lumenal portion of the chain corresponds to 21 to 286; that stretch reads FYLPGSYMHT…LKMEGARVHW (266 aa). The chain crosses the membrane as a helical span at residues 287–307; that stretch reads FSILNSLMVIFFLAGIVFVIF. Topologically, residues 308 to 362 are cytoplasmic; it reads LRTVRRDLTKYEELDKEAQAQMNEELSGWKLVVGDVFREPEMSKLLCIMVGDGVR. A helical transmembrane segment spans residues 363–383; that stretch reads ITGMAVVTIVFAALGFMSPAS. At 384–386 the chain is on the lumenal side; it reads RGM. The helical transmembrane segment at 387–407 threads the bilayer; sequence LLTGMIILYLFLGIVAGYAGV. The Cytoplasmic portion of the chain corresponds to 408-426; that stretch reads RLWRTVKGTSEGWRSLSWS. A helical transmembrane segment spans residues 427-447; the sequence is IACFFPGIAFVILTVLNFLLW. Residues 448 to 460 are Lumenal-facing; it reads SSNSTGAIPISLY. Residues 461 to 481 form a helical membrane-spanning segment; sequence FELLALWFCISVPLTLFGGFL. Over 482-510 the chain is Cytoplasmic; the sequence is GTRAEAIQFPVRTNQIPREIPERKYPSWL. A helical transmembrane segment spans residues 511 to 531; it reads LVLGAGTLPFGTLFIELFFIF. Over 532-541 the chain is Lumenal; the sequence is SSIWLGRFYY. Residues 542 to 562 traverse the membrane as a helical segment; the sequence is VFGFLLIVLLLLVVVCAEVSV. Residues 563–580 lie on the Cytoplasmic side of the membrane; the sequence is VLTYMHLCVEDWRWWWKA. Residues 581-601 traverse the membrane as a helical segment; it reads FYASGSVALYVFAYSINYLVF. Over 602–613 the chain is Lumenal; sequence DLQSLSGPVSAM. Residues 614 to 634 form a helical membrane-spanning segment; sequence LYIGYSLLMAIAIMLATGTIG. Residues 635 to 652 lie on the Cytoplasmic side of the membrane; it reads FLTSFYFVHYLFSSVKID. The Endoplasmic reticulum export signal motif lies at 641–646; that stretch reads FVHYLF. The short motif at 650-652 is the Golgi retention signal element; sequence KID.

It belongs to the nonaspanin (TM9SF) (TC 9.A.2) family.

It is found in the endosome membrane. It localises to the golgi apparatus membrane. This chain is Transmembrane 9 superfamily member 12, found in Arabidopsis thaliana (Mouse-ear cress).